We begin with the raw amino-acid sequence, 108 residues long: Putative DNA-directed RNA polymerase subunit 1 inactive homolog (108 aa).

The polypeptide is Putative DNA-directed RNA polymerase subunit 1 inactive homolog (Acanthamoeba polyphaga (Amoeba)).